The primary structure comprises 402 residues: Eukaryotic initiation factor 4A (402 aa).

The Q motif motif lies at E29 to K57. A Helicase ATP-binding domain is found at I60–I230. Residue A73–T80 participates in ATP binding. The short motif at D178 to D181 is the DEAD box element. The Helicase C-terminal domain maps to G241 to I402.

The protein belongs to the DEAD box helicase family. eIF4A subfamily. As to quaternary structure, eIF4F is a multi-subunit complex, the composition of which varies with external and internal environmental conditions. It is composed of at least EIF4A, EIF4E and EIF4G.

The catalysed reaction is ATP + H2O = ADP + phosphate + H(+). ATP-dependent RNA helicase which is a subunit of the eIF4F complex involved in cap recognition and is required for mRNA binding to ribosome. In the current model of translation initiation, eIF4A unwinds RNA secondary structures in the 5'-UTR of mRNAs which is necessary to allow efficient binding of the small ribosomal subunit, and subsequent scanning for the initiator codon. This chain is Eukaryotic initiation factor 4A (inf-1), found in Caenorhabditis elegans.